The chain runs to 632 residues: Serine/threonine-protein kinase plk-2 (632 aa).

The tract at residues 1–26 is disordered; it reads MQRVQPSAARVKSQKKEKAPPDVPDV. One can recognise a Protein kinase domain in the interval 36 to 287; that stretch reads YEKGKFLGKG…ARAVCRDHFF (252 aa). ATP is bound by residues 42-50 and lysine 65; that span reads LGKGGFAHC. Aspartate 159 (proton acceptor) is an active-site residue. Residues 313 to 334 form a disordered region; it reads AEENVSPSGTIDQRGPHQAGRS. POLO box domains follow at residues 405 to 484 and 506 to 588; these read WISK…YMND and TLRV…RLVE.

This sequence belongs to the protein kinase superfamily. Ser/Thr protein kinase family. CDC5/Polo subfamily. In terms of assembly, interacts (via POLO box domain) with mex-5 and mex-6. Interacts (via POLO box domain) with him-8 (via N-terminus); the interaction mediates plk-2 recruitment to the pairing region of X chromosomes during meiosis. Interacts with sun-1. May interact with nicotinic acetylcholine receptor. Requires Mg(2+) as cofactor. Expressed in oocytes.

The protein resides in the nucleus. It localises to the cytoplasm. The protein localises to the cytoskeleton. Its subcellular location is the microtubule organizing center. It is found in the centrosome. The protein resides in the chromosome. It localises to the centromere. The protein localises to the kinetochore. The catalysed reaction is L-seryl-[protein] + ATP = O-phospho-L-seryl-[protein] + ADP + H(+). It catalyses the reaction L-threonyl-[protein] + ATP = O-phospho-L-threonyl-[protein] + ADP + H(+). Its function is as follows. Serine/threonine-protein kinase which plays a role, during oogenesis, in chromosome pairing and synapsis, by facilitating the recruitment and attachment of meiotic chromosomes to the nuclear envelope during prophase. Promotes the localization of brc-1 to the short arm of homologous chromosomes during meiotic prophase I. Regulates the formation of sun-1 patches along the nuclear envelope. Promotes meiotic nuclei apoptosis in response to chromosomal asynapsis. Plays a redundant role with plk-1 in the establishment of cell polarity downstream of mex-5 and mex-6 during the first embryonic cell divisions. Plays a role in nicotinic acetylcholine receptor-mediated sensitivity to nicotine but not levamisole. Regulates motility. The polypeptide is Serine/threonine-protein kinase plk-2 (Caenorhabditis elegans).